An 844-amino-acid chain; its full sequence is Saxiphilin (844 aa).

A signal peptide spans 1 to 19 (MAPTFQTALFFTIISLSFA). Positions 26–106 (VRWCAISDLE…IAEPYSSNRD (81 aa)) constitute a Transferrin-like 1; first part domain. 19 disulfide bridges follow: cysteine 29–cysteine 64, cysteine 39–cysteine 55, cysteine 110–cysteine 130, cysteine 141–cysteine 148, cysteine 150–cysteine 172, cysteine 180–cysteine 202, cysteine 222–cysteine 244, cysteine 277–cysteine 360, cysteine 322–cysteine 335, cysteine 332–cysteine 343, cysteine 388–cysteine 402, cysteine 495–cysteine 527, cysteine 505–cysteine 518, cysteine 552–cysteine 839, cysteine 570–cysteine 799, cysteine 607–cysteine 685, cysteine 641–cysteine 655, cysteine 652–cysteine 668, and cysteine 725–cysteine 739. Thyroglobulin type-1 domains lie at 107 to 172 (LQKC…RATC) and 177 to 244 (LPKC…PATC). Residues 109-249 (KCLKERQQAL…IPATCQKHDL (141 aa)) are absent in transferrins. Residues 245 to 482 (QKHDLVTTCH…LFHAMKALTG (238 aa)) form the Transferrin-like 1; second part domain. One can recognise a Transferrin-like 2 domain in the interval 492–828 (VRWCTINKLE…YYTTVYGASR (337 aa)).

The protein belongs to the transferrin family. In terms of assembly, monomer. Plasma. Highest levels of transcripts found in the liver, the lung, the pancreas and the brain.

It is found in the secreted. In terms of biological role, binds specifically to the neurotoxin saxitoxin. Its physiological role may be to transport or sequester an endogenous organic molecule other than Fe(3+). It may participate in a detoxification mechanism for neutralizing a microbial toxin. The sequence is that of Saxiphilin from Aquarana catesbeiana (American bullfrog).